The chain runs to 313 residues: Proline iminopeptidase (313 aa).

The 264-residue stretch at Lys35–Glu298 folds into the AB hydrolase-1 domain. Ser110 serves as the catalytic Nucleophile. Asp266 is a catalytic residue. The active-site Proton donor is the His294.

The protein belongs to the peptidase S33 family.

Its subcellular location is the cytoplasm. It catalyses the reaction Release of N-terminal proline from a peptide.. Functionally, specifically catalyzes the removal of N-terminal proline residues from peptides. The sequence is that of Proline iminopeptidase (pip) from Xylella fastidiosa (strain Temecula1 / ATCC 700964).